Consider the following 126-residue polypeptide: Holo-[acyl-carrier-protein] synthase (126 aa).

Positions 9 and 58 each coordinate Mg(2+).

The protein belongs to the P-Pant transferase superfamily. AcpS family. Mg(2+) is required as a cofactor.

It localises to the cytoplasm. It catalyses the reaction apo-[ACP] + CoA = holo-[ACP] + adenosine 3',5'-bisphosphate + H(+). Transfers the 4'-phosphopantetheine moiety from coenzyme A to a Ser of acyl-carrier-protein. The polypeptide is Holo-[acyl-carrier-protein] synthase (Enterobacter sp. (strain 638)).